The primary structure comprises 258 residues: Small ribosomal subunit protein uS2 (258 aa).

A disordered region spans residues 227-258; it reads GEQFAPASEQKEEVKTQEVQEVEDSNDDVIDD. Basic and acidic residues predominate over residues 235-244; the sequence is EQKEEVKTQE. A compositionally biased stretch (acidic residues) spans 246–258; sequence QEVEDSNDDVIDD.

It belongs to the universal ribosomal protein uS2 family.

The sequence is that of Small ribosomal subunit protein uS2 from Caldicellulosiruptor saccharolyticus (strain ATCC 43494 / DSM 8903 / Tp8T 6331).